The chain runs to 73 residues: Large ribosomal subunit protein bL28 (73 aa).

This sequence belongs to the bacterial ribosomal protein bL28 family.

The sequence is that of Large ribosomal subunit protein bL28 from Buchnera aphidicola subsp. Cinara cedri (strain Cc).